Here is a 566-residue protein sequence, read N- to C-terminus: Multidrug and toxin extrusion protein 1 (566 aa).

Residue Met-1 is modified to N-acetylmethionine. A run of 13 helical transmembrane segments spans residues 37–57 (LLVL…ISFI), 72–92 (AVTL…HGLS), 120–140 (LILL…EQIL), 152–172 (LTQT…LYTL), 176–196 (YLLN…ANLV), 216–236 (ALAN…YILW), 257–276 (SFLQ…WWAY), 295–315 (SITY…SVAA), 336–356 (AISL…LLGC), 370–390 (IVAL…FEAL), 409–429 (IVNA…LMFV), 437–457 (LWSG…VFIA), and 543–563 (GLLF…RVYI).

The protein belongs to the multi antimicrobial extrusion (MATE) (TC 2.A.66.1) family. Highly expressed in kidney and placenta, moderately in stomach, colon, lung, spleen, skeletal muscle and prostate, and slightly in spleen. In the kidney, found in medulla and cortex, especially in the proximal convoluted and straight tubules. No expression was observed in heart, brain, small intestine and liver. Expressed in Sertoli cells in testis.

The protein localises to the cell membrane. Its subcellular location is the apical cell membrane. It catalyses the reaction thiamine(out) + H(+)(in) = thiamine(in) + H(+)(out). It carries out the reaction estrone 3-sulfate(in) + H(+)(out) = estrone 3-sulfate(out) + H(+)(in). The catalysed reaction is creatinine(in) + H(+)(out) = creatinine(out) + H(+)(in). The enzyme catalyses agmatine(in) + H(+)(out) = agmatine(out) + H(+)(in). Its function is as follows. Multidrug efflux pump that functions as a H(+)/organic cation antiporter. Plays a physiological role in the excretion of cationic compounds including endogenous metabolites, drugs, toxins through the kidney and liver, into urine and bile respectively. Mediates the efflux of endogenous compounds such as creatinine, vitamin B1/thiamine, agmatine and estrone-3-sulfate. May also contribute to regulate the transport of cationic compounds in testis across the blood-testis-barrier. This Rattus norvegicus (Rat) protein is Multidrug and toxin extrusion protein 1 (Slc47a1).